The chain runs to 149 residues: Large ribosomal subunit protein bL9 (149 aa).

The protein belongs to the bacterial ribosomal protein bL9 family.

In terms of biological role, binds to the 23S rRNA. This chain is Large ribosomal subunit protein bL9, found in Bacillus pumilus (strain SAFR-032).